The following is a 232-amino-acid chain: 7-cyano-7-deazaguanine synthase (232 aa).

An ATP-binding site is contributed by 13-23; that stretch reads LSGGLDSATVL. The Zn(2+) site is built by Cys194, Cys204, Cys207, and Cys210.

This sequence belongs to the QueC family. Requires Zn(2+) as cofactor.

It catalyses the reaction 7-carboxy-7-deazaguanine + NH4(+) + ATP = 7-cyano-7-deazaguanine + ADP + phosphate + H2O + H(+). It functions in the pathway purine metabolism; 7-cyano-7-deazaguanine biosynthesis. Catalyzes the ATP-dependent conversion of 7-carboxy-7-deazaguanine (CDG) to 7-cyano-7-deazaguanine (preQ(0)). In Hydrogenovibrio crunogenus (strain DSM 25203 / XCL-2) (Thiomicrospira crunogena), this protein is 7-cyano-7-deazaguanine synthase.